The following is a 198-amino-acid chain: Sensory transduction protein RegX3 (198 aa).

Residues methionine 1 to leucine 87 form the Response regulatory domain. Aspartate 23 carries the 4-aspartylphosphate modification. A DNA-binding region (ompR/PhoB-type) is located at residues aspartate 99–serine 198.

In terms of processing, phosphorylated by SenX3.

In terms of biological role, member of the two-component regulatory system SenX3/RegX3. The polypeptide is Sensory transduction protein RegX3 (rgx3) (Mycobacterium leprae (strain TN)).